Reading from the N-terminus, the 894-residue chain is Cell wall-associated protease (894 aa).

The signal sequence occupies residues 1–31 (MKRRKFSSVVAAVLIFALIFSLFSPGTKAAA). The region spanning 422–729 (QWPLKNNGEN…YGRLNVMKAV (308 aa)) is the Peptidase S8 domain. Catalysis depends on charge relay system residues D462, H497, and S650.

This sequence belongs to the peptidase S8 family. In terms of processing, proteolytically cleaved to yield CWBP23 and CWBP52.

It localises to the secreted. It is found in the cell wall. Its activity is regulated as follows. Inhibited by PMSF. Its function is as follows. CWBP52 is a serine-type protease that could be involved in proteoglycan peptide bridges. The polypeptide is Cell wall-associated protease (wprA) (Bacillus subtilis (strain 168)).